The chain runs to 284 residues: Homeobox protein SIX1 (284 aa).

The homeobox DNA-binding region spans 124 to 183 (GEETSYCFKEKSRGVLREWYAHNPYPSPREKRELAEATGLTTTQVSNWFKNRRQRDRAAE). A disordered region spans residues 168–271 (VSNWFKNRRQ…AHQHQLQDSL (104 aa)). Basic and acidic residues predominate over residues 179 to 190 (DRAAEAKERENT). Residues 242-271 (RSSNYSLPGLTASQPSHGLQAHQHQLQDSL) show a composition bias toward polar residues.

Belongs to the SIX/Sine oculis homeobox family. Interacts with DACH1. Interacts with EYA1. Interacts with EYA2. Interacts with CDH1. Interacts with TBX18. Interacts with CEBPA. Interacts with CEBPB. Interacts with EBF2. In terms of processing, phosphorylated during interphase; becomes hyperphosphorylated during mitosis. Hyperphosphorylation impairs binding to promoter elements. Ubiquitinated by the anaphase promoting complex (APC), leading to its proteasomal degradation.

The protein localises to the nucleus. Its subcellular location is the cytoplasm. Functionally, transcription factor that is involved in the regulation of cell proliferation, apoptosis and embryonic development. Plays an important role in the development of several organs, including kidney, muscle and inner ear. Depending on context, functions as a transcriptional repressor or activator. Lacks an activation domain, and requires interaction with EYA family members for transcription activation. Mediates nuclear translocation of EYA1 and EYA2. Binds the 5'-TCA[AG][AG]TTNC-3' motif present in the MEF3 element in the MYOG promoter and CIDEA enhancer. Regulates the expression of numerous genes, including MYC, CCNA1, CCND1 and EZR. Acts as an activator of the IGFBP5 promoter, probably coactivated by EYA2. Repression of precursor cell proliferation in myoblasts is switched to activation through recruitment of EYA3 to the SIX1-DACH1 complex. During myogenesis, seems to act together with EYA2 and DACH2. Regulates the expression of CCNA1. Promotes brown adipocyte differentiation. This Lagothrix lagotricha (Brown woolly monkey) protein is Homeobox protein SIX1 (SIX1).